Reading from the N-terminus, the 130-residue chain is Small ribosomal subunit protein eS8 (130 aa).

It belongs to the eukaryotic ribosomal protein eS8 family. Part of the 30S ribosomal subunit.

The sequence is that of Small ribosomal subunit protein eS8 from Thermococcus gammatolerans (strain DSM 15229 / JCM 11827 / EJ3).